The primary structure comprises 72 residues: Disintegrin cereberin (72 aa).

Residues 1–72 (EAGEECDCGS…SADCPRNRFH (72 aa)) enclose the Disintegrin domain. 6 cysteine pairs are disulfide-bonded: Cys6-Cys21, Cys8-Cys16, Cys15-Cys38, Cys29-Cys35, Cys34-Cys59, and Cys47-Cys66. Residues 51–53 (RGD) carry the Cell attachment site motif. The disordered stretch occupies residues 51–72 (RGDNPDDRCTGQSADCPRNRFH).

This sequence belongs to the venom metalloproteinase (M12B) family. P-II subfamily. P-IIa sub-subfamily. As to quaternary structure, monomer (disintegrin). As to expression, expressed by the venom gland.

It is found in the secreted. In terms of biological role, inhibits fibrinogen interaction with platelet. Acts by binding to alpha-IIb/beta-3 (ITGA2B/ITGB3) on the platelet surface and inhibits aggregation induced by ADP, thrombin, platelet-activating factor and collagen. This Crotalus cerberus (Arizona black rattlesnake) protein is Disintegrin cereberin.